The chain runs to 854 residues: Protein ROOT HAIR DEFECTIVE 3 homolog 1 (854 aa).

Topologically, residues 1–680 (MDEAAAAEAV…QAHKRGNGRL (680 aa)) are cytoplasmic. One can recognise a GB1/RHD3-type G domain in the interval 37 to 252 (GLSYAVVSIM…IAPGGLAGDR (216 aa)). Residue 47 to 54 (GPQSSGKS) coordinates GTP. The stretch at 217–242 (ALPSFEEKEEQFREQVQQLRQRFSNS) forms a coiled coil. Residues 681 to 701 (PPPWAMVAIAVLGFNEIMTLL) form a helical membrane-spanning segment. Over 702 to 704 (RNP) the chain is Lumenal. Residues 705-725 (IYLFLLFVGYLLVKALAVQLD) traverse the membrane as a helical segment. Residues 726-854 (INREFQNGVV…NESNNAYSIV (129 aa)) are Cytoplasmic-facing. Composition is skewed to low complexity over residues 758–781 (TEQQQQQGHHQDAAAEAPQQQQQP) and 814–828 (VSPSPSSSSSTVTSP). The tract at residues 758–854 (TEQQQQQGHH…NESNNAYSIV (97 aa)) is disordered. The span at 842–854 (QPDNESNNAYSIV) shows a compositional bias: polar residues.

It belongs to the TRAFAC class dynamin-like GTPase superfamily. GB1/RHD3 GTPase family. RHD3 subfamily.

It is found in the endoplasmic reticulum membrane. Functionally, probable GTP-binding protein that may be involved in cell development. This Oryza sativa subsp. japonica (Rice) protein is Protein ROOT HAIR DEFECTIVE 3 homolog 1.